We begin with the raw amino-acid sequence, 193 residues long: Penicillin-binding protein activator LpoB (193 aa).

An N-terminal signal peptide occupies residues Met-1–Gly-16. Cys-17 is lipidated: N-palmitoyl cysteine. The S-diacylglycerol cysteine moiety is linked to residue Cys-17. A disordered region spans residues Glu-24–Met-55. The span at Val-35–Lys-54 shows a compositional bias: pro residues.

This sequence belongs to the LpoB family. In terms of assembly, interacts with PBP1b.

Its subcellular location is the cell outer membrane. Regulator of peptidoglycan synthesis that is essential for the function of penicillin-binding protein 1B (PBP1b). This chain is Penicillin-binding protein activator LpoB, found in Yersinia enterocolitica serotype O:8 / biotype 1B (strain NCTC 13174 / 8081).